The primary structure comprises 320 residues: Thymidylate synthase (320 aa).

DUMP-binding positions include Arg27 and 182–183 (RR). Cys202 (nucleophile) is an active-site residue. Residues 222 to 225 (RSAD), Asn233, and 263 to 265 (HIY) each bind dUMP. A (6R)-5,10-methylene-5,6,7,8-tetrahydrofolate-binding site is contributed by Asp225. Ala319 contributes to the (6R)-5,10-methylene-5,6,7,8-tetrahydrofolate binding site.

This sequence belongs to the thymidylate synthase family. Bacterial-type ThyA subfamily. In terms of assembly, homodimer.

It is found in the cytoplasm. The enzyme catalyses dUMP + (6R)-5,10-methylene-5,6,7,8-tetrahydrofolate = 7,8-dihydrofolate + dTMP. The protein operates within pyrimidine metabolism; dTTP biosynthesis. Its function is as follows. Catalyzes the reductive methylation of 2'-deoxyuridine-5'-monophosphate (dUMP) to 2'-deoxythymidine-5'-monophosphate (dTMP) while utilizing 5,10-methylenetetrahydrofolate (mTHF) as the methyl donor and reductant in the reaction, yielding dihydrofolate (DHF) as a by-product. This enzymatic reaction provides an intracellular de novo source of dTMP, an essential precursor for DNA biosynthesis. The chain is Thymidylate synthase from Limosilactobacillus reuteri (strain DSM 20016) (Lactobacillus reuteri).